Reading from the N-terminus, the 350-residue chain is MIEADRLITASPREREEQQDRAIRPLKLADYIGQPGVREQMELFIQAARGRAESLDHTLIFGPPGLGKTTLANIIAQEMGVSIKSTSGPVLERPGDLAALLTNLEAGDVLFVDEIHRLSPIVEEVLYPAMEDFQLDIMIGEGPAARSIKLDLPPFTLVGATTRAGMLTNPLRDRFGIVQRLEFYGIDDLATIVTRSAGILGLPIEDQGAYEIARRARGTPRIANRLLRRVRDFAEVRGRGHITREIADQALNLLDVDERGFDHSDRRLLLAMIEKFDGGPVGVDSLAAAISEERHTIEDVLEPYLIQQGYMMRTPRGRVVTRHAYLHFGLNTPKRLGEQPSGDLFAVSDE.

Residues 1 to 20 (MIEADRLITASPREREEQQD) are disordered. The large ATPase domain (RuvB-L) stretch occupies residues 4 to 184 (ADRLITASPR…FGIVQRLEFY (181 aa)). Residues isoleucine 23, arginine 24, glycine 65, lysine 68, threonine 69, threonine 70, 131–133 (EDF), arginine 174, tyrosine 184, and arginine 221 each bind ATP. Threonine 69 contacts Mg(2+). Positions 185–255 (GIDDLATIVT…IADQALNLLD (71 aa)) are small ATPAse domain (RuvB-S). The segment at 258-350 (ERGFDHSDRR…SGDLFAVSDE (93 aa)) is head domain (RuvB-H). Residues arginine 294, arginine 313, and arginine 318 each coordinate DNA.

The protein belongs to the RuvB family. As to quaternary structure, homohexamer. Forms an RuvA(8)-RuvB(12)-Holliday junction (HJ) complex. HJ DNA is sandwiched between 2 RuvA tetramers; dsDNA enters through RuvA and exits via RuvB. An RuvB hexamer assembles on each DNA strand where it exits the tetramer. Each RuvB hexamer is contacted by two RuvA subunits (via domain III) on 2 adjacent RuvB subunits; this complex drives branch migration. In the full resolvosome a probable DNA-RuvA(4)-RuvB(12)-RuvC(2) complex forms which resolves the HJ.

It localises to the cytoplasm. The catalysed reaction is ATP + H2O = ADP + phosphate + H(+). Functionally, the RuvA-RuvB-RuvC complex processes Holliday junction (HJ) DNA during genetic recombination and DNA repair, while the RuvA-RuvB complex plays an important role in the rescue of blocked DNA replication forks via replication fork reversal (RFR). RuvA specifically binds to HJ cruciform DNA, conferring on it an open structure. The RuvB hexamer acts as an ATP-dependent pump, pulling dsDNA into and through the RuvAB complex. RuvB forms 2 homohexamers on either side of HJ DNA bound by 1 or 2 RuvA tetramers; 4 subunits per hexamer contact DNA at a time. Coordinated motions by a converter formed by DNA-disengaged RuvB subunits stimulates ATP hydrolysis and nucleotide exchange. Immobilization of the converter enables RuvB to convert the ATP-contained energy into a lever motion, pulling 2 nucleotides of DNA out of the RuvA tetramer per ATP hydrolyzed, thus driving DNA branch migration. The RuvB motors rotate together with the DNA substrate, which together with the progressing nucleotide cycle form the mechanistic basis for DNA recombination by continuous HJ branch migration. Branch migration allows RuvC to scan DNA until it finds its consensus sequence, where it cleaves and resolves cruciform DNA. The sequence is that of Holliday junction branch migration complex subunit RuvB from Ectopseudomonas mendocina (strain ymp) (Pseudomonas mendocina).